The chain runs to 406 residues: Mitochondrial ribosome-associated GTPase 2 (406 aa).

Residues 15–406 are localized in the mitochondria; sequence FEGVGHWALS…LGQGRQPLRW (392 aa). The segment at 30–406 is not localized in the mitochondria; that stretch reads KPSRLLPQQA…LGQGRQPLRW (377 aa). Residues 70–224 form the Obg domain; the sequence is RYFVDYRRVL…RVLHLELKTV (155 aa). Residues 225 to 390 enclose the OBG-type G domain; that stretch reads AHAGMVGFPN…LLLHLKVLYD (166 aa). GTP-binding positions include 231–238, 256–260, 278–281, 345–348, and 371–373; these read GFPNAGKS, FTTLK, DIPG, NKID, and SAL. 2 residues coordinate Mg(2+): Ser-238 and Thr-258.

The protein belongs to the TRAFAC class OBG-HflX-like GTPase superfamily. OBG GTPase family. In terms of assembly, associates with the mitochondrial ribosome large subunit; the association occurs in a GTP-dependent manner. Mg(2+) serves as cofactor.

It is found in the mitochondrion. Its subcellular location is the mitochondrion inner membrane. Plays a role in the regulation of the mitochondrial ribosome assembly and of translational activity. Displays GTPase activity. Involved in the ribosome maturation process. The polypeptide is Mitochondrial ribosome-associated GTPase 2 (MTG2) (Pongo abelii (Sumatran orangutan)).